The chain runs to 229 residues: Enolase-phosphatase E1 (229 aa).

This sequence belongs to the HAD-like hydrolase superfamily. MasA/MtnC family. As to quaternary structure, monomer. Requires Mg(2+) as cofactor.

The catalysed reaction is 5-methylsulfanyl-2,3-dioxopentyl phosphate + H2O = 1,2-dihydroxy-5-(methylsulfanyl)pent-1-en-3-one + phosphate. It participates in amino-acid biosynthesis; L-methionine biosynthesis via salvage pathway; L-methionine from S-methyl-5-thio-alpha-D-ribose 1-phosphate: step 3/6. Its pathway is amino-acid biosynthesis; L-methionine biosynthesis via salvage pathway; L-methionine from S-methyl-5-thio-alpha-D-ribose 1-phosphate: step 4/6. In terms of biological role, bifunctional enzyme that catalyzes the enolization of 2,3-diketo-5-methylthiopentyl-1-phosphate (DK-MTP-1-P) into the intermediate 2-hydroxy-3-keto-5-methylthiopentenyl-1-phosphate (HK-MTPenyl-1-P), which is then dephosphorylated to form the acireductone 1,2-dihydroxy-3-keto-5-methylthiopentene (DHK-MTPene). The sequence is that of Enolase-phosphatase E1 from Yersinia enterocolitica serotype O:8 / biotype 1B (strain NCTC 13174 / 8081).